The sequence spans 417 residues: Serine hydroxymethyltransferase (417 aa).

(6S)-5,6,7,8-tetrahydrofolate contacts are provided by residues Leu121 and 125-127 (GHL). Lys229 is modified (N6-(pyridoxal phosphate)lysine). 355–357 (SPF) serves as a coordination point for (6S)-5,6,7,8-tetrahydrofolate.

Belongs to the SHMT family. In terms of assembly, homodimer. Requires pyridoxal 5'-phosphate as cofactor.

The protein localises to the cytoplasm. It carries out the reaction (6R)-5,10-methylene-5,6,7,8-tetrahydrofolate + glycine + H2O = (6S)-5,6,7,8-tetrahydrofolate + L-serine. The protein operates within one-carbon metabolism; tetrahydrofolate interconversion. Its pathway is amino-acid biosynthesis; glycine biosynthesis; glycine from L-serine: step 1/1. Catalyzes the reversible interconversion of serine and glycine with tetrahydrofolate (THF) serving as the one-carbon carrier. This reaction serves as the major source of one-carbon groups required for the biosynthesis of purines, thymidylate, methionine, and other important biomolecules. Also exhibits THF-independent aldolase activity toward beta-hydroxyamino acids, producing glycine and aldehydes, via a retro-aldol mechanism. This is Serine hydroxymethyltransferase from Erwinia tasmaniensis (strain DSM 17950 / CFBP 7177 / CIP 109463 / NCPPB 4357 / Et1/99).